Here is a 375-residue protein sequence, read N- to C-terminus: MMDNINFEFSNASQGSRLQLQQQPPQPFNLQDLNMIQYNQPSSPWTTETFSGLTPYDCTANQSFPVQCSSSKPYPSSFHPYHHQSSDSPSLDQSVSMIPMQPLPDQYMKPLYQRSCSNDFAATNASSASYSLSFEASHDPQELCRRTYSNSNVTHLNFTSSQHQPKQSHPRFSSPPSFSIHGGSMAPNCVNKTRIRWTQDLHEKFVECVNRLGGADKATPKAILKRMDSDGLTIFHVKSHLQKYRIAKYMPESQEGKFEKRACAKELSQLDTRTGVQIKEALQLQLDVQRHLHEQLEIQRNLQLRIEEQGKQLKMMMEQQQKNKESLLKKLPDAEASLSLLDPHIHSPPSPFLVHDAEALMLTSYEDTQLQSTKS.

The segment covering 159-171 has biased composition (polar residues); that stretch reads TSSQHQPKQSHPR. The tract at residues 159 to 178 is disordered; it reads TSSQHQPKQSHPRFSSPPSF. In terms of domain architecture, HTH myb-type spans 189 to 249; it reads CVNKTRIRWT…HLQKYRIAKY (61 aa). Positions 220–245 form a DNA-binding region, H-T-H motif; that stretch reads PKAILKRMDSDGLTIFHVKSHLQKYR. A coiled-coil region spans residues 279 to 299; sequence KEALQLQLDVQRHLHEQLEIQ. The LHEQLE motif lies at 292–297; that stretch reads LHEQLE.

Belongs to the MYB-CC family.

Its subcellular location is the nucleus. The polypeptide is Myb family transcription factor PHL5 (Arabidopsis thaliana (Mouse-ear cress)).